A 587-amino-acid chain; its full sequence is Capsid vertex component 2 (587 aa).

The interval 1-53 (MAEYVNYVLGSLYVSDTATSTIPTDVRNFIAPPFPLNFWSGPTFTVRSNTRAD) is interaction with major capsid protein/MCP. The segment at 113–132 (SADAATPQVNASEADQRPDN) is disordered.

It belongs to the herpesviridae CVC2 protein family. Heterodimerizes with CVC1. Interacts with major capsid protein/MCP and triplex capsid protein 1/TRX1 at the pentamer vertices. Interacts with the large tegument protein/LTP.

The protein resides in the virion. Its subcellular location is the host nucleus. Capsid vertex-specific component that plays a role during viral DNA encapsidation, assuring correct genome cleavage and presumably stabilizing capsids that contain full-length viral genomes. Participates in the interaction between the capsid and the tegument through interaction with the large tegument protein/LTP. In Equine herpesvirus 1 (strain V592) (EHV-1), this protein is Capsid vertex component 2.